The sequence spans 370 residues: Anthranilate phosphoribosyltransferase (370 aa).

The disordered stretch occupies residues 1 to 27 (MALSAEGSSGGSRGGSPKAEAASVPSW). 5-phospho-alpha-D-ribose 1-diphosphate-binding positions include Gly-107, 110 to 111 (GD), Thr-115, 117 to 120 (NLST), 135 to 143 (KHGNRAASS), and Gly-147. Gly-107 provides a ligand contact to anthranilate. Ser-119 contacts Mg(2+). Asn-138 contributes to the anthranilate binding site. Residue Arg-193 coordinates anthranilate. Positions 251 and 252 each coordinate Mg(2+).

Belongs to the anthranilate phosphoribosyltransferase family. In terms of assembly, homodimer. Requires Mg(2+) as cofactor.

It carries out the reaction N-(5-phospho-beta-D-ribosyl)anthranilate + diphosphate = 5-phospho-alpha-D-ribose 1-diphosphate + anthranilate. Its pathway is amino-acid biosynthesis; L-tryptophan biosynthesis; L-tryptophan from chorismate: step 2/5. In terms of biological role, catalyzes the transfer of the phosphoribosyl group of 5-phosphorylribose-1-pyrophosphate (PRPP) to anthranilate to yield N-(5'-phosphoribosyl)-anthranilate (PRA). The chain is Anthranilate phosphoribosyltransferase from Mycobacterium bovis (strain ATCC BAA-935 / AF2122/97).